Consider the following 456-residue polypeptide: tRNA modification GTPase MnmE (456 aa).

(6S)-5-formyl-5,6,7,8-tetrahydrofolate-binding residues include Arg-24, Glu-81, and Lys-120. The 164-residue stretch at 216–379 folds into the TrmE-type G domain; sequence GMKVVIAGRP…LREHLKECIG (164 aa). Asn-226 contributes to the K(+) binding site. Residues 226–231, 245–251, and 270–273 contribute to the GTP site; these read NAGKSS, TAIEGTT, and DTAG. Residue Ser-230 participates in Mg(2+) binding. The K(+) site is built by Thr-245, Ile-247, and Thr-250. Thr-251 lines the Mg(2+) pocket. Residue Lys-456 coordinates (6S)-5-formyl-5,6,7,8-tetrahydrofolate.

Belongs to the TRAFAC class TrmE-Era-EngA-EngB-Septin-like GTPase superfamily. TrmE GTPase family. In terms of assembly, homodimer. Heterotetramer of two MnmE and two MnmG subunits. The cofactor is K(+).

Its subcellular location is the cytoplasm. Functionally, exhibits a very high intrinsic GTPase hydrolysis rate. Involved in the addition of a carboxymethylaminomethyl (cmnm) group at the wobble position (U34) of certain tRNAs, forming tRNA-cmnm(5)s(2)U34. In Marinobacter nauticus (strain ATCC 700491 / DSM 11845 / VT8) (Marinobacter aquaeolei), this protein is tRNA modification GTPase MnmE.